A 322-amino-acid chain; its full sequence is Thymidylate synthase (322 aa).

Residues R25 and 184–185 (RR) each bind dUMP. C204 (nucleophile) is an active-site residue. Residues 224–227 (RSGD), N235, and 265–267 (HIY) each bind dUMP. D227 serves as a coordination point for (6R)-5,10-methylene-5,6,7,8-tetrahydrofolate. A (6R)-5,10-methylene-5,6,7,8-tetrahydrofolate-binding site is contributed by A321.

This sequence belongs to the thymidylate synthase family. Bacterial-type ThyA subfamily. In terms of assembly, homodimer.

It localises to the cytoplasm. It catalyses the reaction dUMP + (6R)-5,10-methylene-5,6,7,8-tetrahydrofolate = 7,8-dihydrofolate + dTMP. Its pathway is pyrimidine metabolism; dTTP biosynthesis. Functionally, catalyzes the reductive methylation of 2'-deoxyuridine-5'-monophosphate (dUMP) to 2'-deoxythymidine-5'-monophosphate (dTMP) while utilizing 5,10-methylenetetrahydrofolate (mTHF) as the methyl donor and reductant in the reaction, yielding dihydrofolate (DHF) as a by-product. This enzymatic reaction provides an intracellular de novo source of dTMP, an essential precursor for DNA biosynthesis. This Leuconostoc mesenteroides subsp. mesenteroides (strain ATCC 8293 / DSM 20343 / BCRC 11652 / CCM 1803 / JCM 6124 / NCDO 523 / NBRC 100496 / NCIMB 8023 / NCTC 12954 / NRRL B-1118 / 37Y) protein is Thymidylate synthase.